A 194-amino-acid chain; its full sequence is Prefoldin subunit 3 (194 aa).

The protein belongs to the prefoldin subunit alpha family. As to quaternary structure, heterohexamer of two PFD-alpha type and four PFD-beta type subunits. Interacts with itself. Interacts with Vhl and betaTub56D/tubulin beta-1 chain. Interacts with tubulin alpha-beta heterodimers by itself or in complex with Vhl. Does not interact with microtubules (MTs). In terms of tissue distribution, expressed in larval central nervous system (CNS) and pupal testis (at protein level).

The protein resides in the cytoplasm. In terms of biological role, binds specifically to cytosolic chaperonin (c-CPN) and transfers target proteins to it. Binds to nascent polypeptide chain and promotes folding in an environment in which there are many competing pathways for nonnative proteins. Required for tubulin stability and spindle and centrosome formation in cooperation with Vhl. The protein is Prefoldin subunit 3 (mgr) of Drosophila melanogaster (Fruit fly).